Here is a 1039-residue protein sequence, read N- to C-terminus: MVMVDALNLGRRLRVRSTAYVAGEPVPFFWPMRTFIHHNPLYGLEHMPFEQAVRRGAELFHARMFLPRSDYQRWQREGKVRQDTLAEEIARRAQALPAVPGIDWPRWLQALMQSAHDRDVVVPGVRAPDVHAALHGQPPSAQAVDVAVLLPALEQRLHGLTLPEAVDALWGTRLADELDELVIKSYLDFFDEDQSSWRMPGRERGLFAAWSEIARRNARMFLRGLHVRRTLGRVQDPESAVVHVMEEMGIDPDAWSAYFTRELTRLHGWTGFVRWRSSAKHYYWAQRYPAEVVDLLAVRLVVGLALLQESARHRRTPVRREQLDALLHERGAECLLRNALHSGEVLPDWAQRIDDTLSRGGSKRCEALLQRYWPLWQARQGQDQAAALRELAAAADATAALEVLSPEDIAGLIQGLQEFARQEGMVWTLAMEAQAIDQLLAQVQVPQDLAAGKRPFAQAWFCIDVRAEPIRRHLERVGDYQTFGIAGFFGVPVGFLGYGKGSESHFCPAVVTPKNLVLELPAELDPEEDDLLSTLGHVLHDLKSSVLSPYVTVEAVGMLFGLDLFGKTLAPLGYSRWRNRIDADKPVTRLLVDKLTREQADSIIRTLQRAMIVKALHAELHIERERVDDDMIRELRETALRHREGPTRLQRTFGVSDKQEAEFIDKLREVYRVDADYASYQLVRLGRIGYSLDEQVNYVHTALTMIGLTKTFSRFVLIVGHSGQTENNPYESALDCGACGGASGLVNARVLAQMANKTAVRERLRGMGIDIPDDTWFLPALHNTTTDAIELSDLVLLPPRHLVYLDRLRNGLRAASRLAAAERMPKLLPQARAIEPAQAWRLAHRLAVDWAQVRPEWGLSKNVYGIIGRRSLSERADLQGRPFLMSYDWRCDPKGRLLENLLAAAVVVGQWINLEHFFSTVDNARLGSGSKAYHNVAGRFGVMTGSLSDLRTGLPAQTVMREGQPYHEPMRMIALIEAPLDFAGRALQSVVKVKSLVLGGWIRAIVIDPTQGYKPFVFNNGQWEERPPLVAPAEEEHAA.

The Zn(2+) site is built by Cys-462, Asp-464, His-721, and Cys-736.

The protein belongs to the inorganic carbon transporter (TC 9.A.2) DabA family. Forms a complex with DabB. The cofactor is Zn(2+).

The protein resides in the cell inner membrane. Its function is as follows. Part of an energy-coupled inorganic carbon pump. In Nitrobacter hamburgensis (strain DSM 10229 / NCIMB 13809 / X14), this protein is Probable inorganic carbon transporter subunit DabA 1.